The sequence spans 336 residues: Ferrochelatase (336 aa).

The Fe cation site is built by His-206 and Glu-287.

This sequence belongs to the ferrochelatase family.

The protein localises to the cytoplasm. The catalysed reaction is heme b + 2 H(+) = protoporphyrin IX + Fe(2+). The protein operates within porphyrin-containing compound metabolism; protoheme biosynthesis; protoheme from protoporphyrin-IX: step 1/1. Functionally, catalyzes the ferrous insertion into protoporphyrin IX. This Neisseria meningitidis serogroup A / serotype 4A (strain DSM 15465 / Z2491) protein is Ferrochelatase.